The chain runs to 857 residues: Potassium channel AKT1 (857 aa).

Residues 1–61 lie on the Cytoplasmic side of the membrane; it reads MRGGALLCGQ…PYDHKYRIWE (61 aa). Residues 62–82 traverse the membrane as a helical segment; sequence AFLVVLVVYTAWVSPFEFGFL. Residues 83–90 are Extracellular-facing; the sequence is RKPRPPLS. The helical transmembrane segment at 91-111 threads the bilayer; the sequence is ITDNIVNAFFAIDIIMTFFVG. The Cytoplasmic portion of the chain corresponds to 112 to 134; that stretch reads YLDKSTYLIVDDRKQIAFKYLRS. The chain crosses the membrane as a helical span at residues 135–155; it reads WFLLDLVSTIPSEAAMRISSQ. The Extracellular portion of the chain corresponds to 156 to 158; it reads SYG. Residues 159-179 form a helical; Voltage-sensor membrane-spanning segment; sequence LFNMLRLWRLRRVGALFARLE. At 180–193 the chain is on the cytoplasmic side; sequence KDRNFNYFWVRCAK. Residues 194–214 traverse the membrane as a helical segment; that stretch reads LVCVTLFAVHCAACFYYLIAA. At 215–241 the chain is on the extracellular side; sequence RNSNPAKTWIGANVANFLEESLWMRYV. An intramembrane region (pore-forming) is located at residues 242–261; sequence TSMYWSITTLTTVGYGDLHP. Topologically, residues 262-265 are extracellular; sequence VNTK. The helical transmembrane segment at 266-286 threads the bilayer; the sequence is EMIFDIFYMLFNLGLTAYLIG. The Cytoplasmic portion of the chain corresponds to 287 to 857; the sequence is NMTNLVVHGT…GDHLIFATDS (571 aa). 372–493 contacts a nucleoside 3',5'-cyclic phosphate; it reads LFRGVSNDLL…IMNNLLQHLK (122 aa). ANK repeat units lie at residues 515–546, 550–579, 583–612, 614–643, 647–676, and 680–709; these read KMDLPLNLCFAAIREDDLLLHQLLKRGLDPNE, NGRTPLHIAASKGTLNCVLLLLEYHADPNC, EGSVPLWEAMVEGHEKVVKVLLEHGSTIDA, DVGHFACTAAEQGNLKLLKEIVLHGGDVTR, TGTSALHTAVCEENIEMVKYLLEQGADVNK, and HGWTPRDLAEQQGHEDIKALFREKLHERRV. A KHA domain is found at 790–857; sequence RVTISCAEKD…GDHLIFATDS (68 aa).

The protein belongs to the potassium channel family. Plant (TC 1.A.1.4) subfamily. In terms of assembly, the potassium channel is probably composed of a homo- or heterotetrameric complex of pore-forming subunits. Possible heteromultimer with AKT2 or KAT3. Part of a K(+)-channel calcium-sensing kinase/phosphatase complex composed by a calcium sensor CBL (CBL1, CBL2, CBL3 or CBL9), a kinase CIPK (CIPK6, CIPK16 or CIPK23), a phosphatase PP2C (AIP1) and a K(+)-channel (AKT1). Interacts directly with AIP1, CBL10, CIPK6, CIPK16 and CIPK23. Phosphorylated by CIPK proteins CIPK6, CIPK16 and CIPK23. The activation by phosphorylation is induced by low K(+) conditions and stimulates K(+) uptake and relocation. Dephosphorylation by AIP1 repressed the transport activity. Preferentially expressed in the peripheral cell layers of root mature including root cortex and root hairs. Detected also, at a lower level, in the mesophyll of the leaves and at restricted sites corresponding to hydathodes and guard cells.

It localises to the cell membrane. Its function is as follows. Highly selective inward-rectifying potassium channel that mediate potassium uptake by plant roots in response to low K(+) conditions, by a calcium-, CBL-, and CIPK-dependent pathway. Positively regulated by phosphorylation by CIPK23. Negatively regulated by a kinase-independent regulatory mechanism involving a competing direct binding of CBL10. Involved in the stomatal regulation by monitoring the turgor pressure in guard cells. Assuming opened or closed conformations in response to the voltage difference across the membrane, the channel is activated by hyperpolarization. May interact with the cytoskeleton or with regulatory proteins. Is essential with POT5/HAK5 for high-affinity potassium uptake in roots during seedling establishment and postgermination growth under low potassium conditions. This Arabidopsis thaliana (Mouse-ear cress) protein is Potassium channel AKT1 (AKT1).